Consider the following 257-residue polypeptide: Thiazole synthase (257 aa).

The active-site Schiff-base intermediate with DXP is the K97. Residues G158, A184–G185, and N206–T207 each bind 1-deoxy-D-xylulose 5-phosphate.

It belongs to the ThiG family. As to quaternary structure, homotetramer. Forms heterodimers with either ThiH or ThiS.

It localises to the cytoplasm. It carries out the reaction [ThiS sulfur-carrier protein]-C-terminal-Gly-aminoethanethioate + 2-iminoacetate + 1-deoxy-D-xylulose 5-phosphate = [ThiS sulfur-carrier protein]-C-terminal Gly-Gly + 2-[(2R,5Z)-2-carboxy-4-methylthiazol-5(2H)-ylidene]ethyl phosphate + 2 H2O + H(+). It participates in cofactor biosynthesis; thiamine diphosphate biosynthesis. Functionally, catalyzes the rearrangement of 1-deoxy-D-xylulose 5-phosphate (DXP) to produce the thiazole phosphate moiety of thiamine. Sulfur is provided by the thiocarboxylate moiety of the carrier protein ThiS. In vitro, sulfur can be provided by H(2)S. This chain is Thiazole synthase, found in Desulforamulus reducens (strain ATCC BAA-1160 / DSM 100696 / MI-1) (Desulfotomaculum reducens).